Consider the following 79-residue polypeptide: ATP synthase subunit c (79 aa).

Helical transmembrane passes span 11–31 (IAVA…IGIL) and 53–73 (FFVV…LGLY).

It belongs to the ATPase C chain family. As to quaternary structure, F-type ATPases have 2 components, F(1) - the catalytic core - and F(0) - the membrane proton channel. F(1) has five subunits: alpha(3), beta(3), gamma(1), delta(1), epsilon(1). F(0) has three main subunits: a(1), b(2) and c(10-14). The alpha and beta chains form an alternating ring which encloses part of the gamma chain. F(1) is attached to F(0) by a central stalk formed by the gamma and epsilon chains, while a peripheral stalk is formed by the delta and b chains.

Its subcellular location is the cell membrane. Functionally, f(1)F(0) ATP synthase produces ATP from ADP in the presence of a proton or sodium gradient. F-type ATPases consist of two structural domains, F(1) containing the extramembraneous catalytic core and F(0) containing the membrane proton channel, linked together by a central stalk and a peripheral stalk. During catalysis, ATP synthesis in the catalytic domain of F(1) is coupled via a rotary mechanism of the central stalk subunits to proton translocation. Key component of the F(0) channel; it plays a direct role in translocation across the membrane. A homomeric c-ring of between 10-14 subunits forms the central stalk rotor element with the F(1) delta and epsilon subunits. The chain is ATP synthase subunit c from Buchnera aphidicola subsp. Schizaphis graminum (strain Sg).